The sequence spans 91 residues: uncharacterized protein (91 aa).

The tract at residues 71-91 is disordered; the sequence is EANDRPSKKCGSGNLRVEKLV.

This is an uncharacterized protein from Archaeoglobus fulgidus (strain ATCC 49558 / DSM 4304 / JCM 9628 / NBRC 100126 / VC-16).